The chain runs to 598 residues: Nuclear receptor subfamily 4 group A member 1 (598 aa).

Disordered regions lie at residues 1–43 (MPCI…PEAA) and 128–151 (GSDY…PPQL). A compositionally biased stretch (low complexity) spans 134-145 (SPCSAPSPSTPS). The required for nuclear import stretch occupies residues 171–466 (RAWTEQLPKA…PAEGKLIFCS (296 aa)). The nuclear receptor DNA-binding region spans 264-339 (EGRCAVCGDN…VGMVKEVVRT (76 aa)). 2 consecutive NR C4-type zinc fingers follow at residues 267-287 (CAVC…CEGC) and 303-327 (CLAN…FQKC). Residues 268–354 (AVCGDNASCQ…RRGRLPSKPK (87 aa)) are required for binding NBRE-containing DNA. Residues 299–361 (AKYICLANKD…KPKQPPETSP (63 aa)) form a required for the interaction with RXRA region. S341 is modified (phosphoserine; by PKA). The segment at 341-361 (SLKGRRGRLPSKPKQPPETSP) is disordered. S351 is subject to Phosphoserine; by PKA, RPS6KA1 and RPS6KA3. The NR LBD domain maps to 360 to 595 (SPAHLLTSLV…PIVDKIFMDT (236 aa)). Positions 521–544 (PRRVEELQNRIASCLKEHVSAEAG) are binds lipopolysaccharide. The segment at 584-595 (PPPIVDKIFMDT) is AF-2.

This sequence belongs to the nuclear hormone receptor family. NR4 subfamily. As to quaternary structure, binds the NGFI-B response element (NBRE) as a monomer. Binds the Nur response element (NurRE), consisting of two inverse NBRE-related octanucleotide repeats separated by 6 base-pairs, as a dimer. Interacts (via N-terminus) with NLRP3 (via LRR repeat domain); the interaction is direct, requires binding of NR4A1/Nur77 to NBRE-containing dsDNA and lipopolysaccharide, and leads to non-canonical NLRP3 inflammasome activation. Interacts with GADD45GIP1. Interacts with STK11. Interacts with IFI27. Heterodimer (via DNA-binding domain) with RXRA (via C-terminus); DNA-binding of the heterodimer is enhanced by 9-cis retinoic acid. Competes for the RXRA interaction with EP300 and thereby attenuates EP300 mediated acetylation of RXRA. Interacts with NCOA1. Interacts with NCOA2. Interacts with NCOA3. The cofactor is Zn(2+). In terms of processing, phosphorylated at Ser-351 by RPS6KA1 and RPS6KA3 in response to mitogenic or stress stimuli. Post-translationally, acetylated by p300/CBP, acetylation increases stability. Deacetylated by HDAC1.

It is found in the nucleus. Its subcellular location is the cytoplasm. The protein resides in the cytosol. It localises to the mitochondrion. Functionally, orphan nuclear receptor. Binds the NGFI-B response element (NBRE) 5'-AAAGGTCA-3'. Binds 9-cis-retinoic acid outside of its ligand-binding (NR LBD) domain. Participates in energy homeostasis by sequestrating the kinase STK11 in the nucleus, thereby attenuating cytoplasmic AMPK activation. Regulates the inflammatory response in macrophages by regulating metabolic adaptations during inflammation, including repressing the transcription of genes involved in the citric acid cycle (TCA). Inhibits NF-kappa-B signaling by binding to low-affinity NF-kappa-B binding sites, such as at the IL2 promoter. May act concomitantly with NR4A2 in regulating the expression of delayed-early genes during liver regeneration. Plays a role in the vascular response to injury. In terms of biological role, in the cytosol, upon its detection of both bacterial lipopolysaccharide (LPS) and NBRE-containing mitochondrial DNA released by GSDMD pores during pyroptosis, it promotes non-canonical NLRP3 inflammasome activation by stimulating association of NLRP3 and NEK7. This is Nuclear receptor subfamily 4 group A member 1 (NR4A1) from Bos taurus (Bovine).